The sequence spans 176 residues: RING-H2 finger protein ATL73 (176 aa).

The N-terminal stretch at 1 to 16 (MARFLLATQATPTISA) is a signal peptide. Residues 42-62 (VIILAALLCALICALGINSVL) form a helical membrane-spanning segment. The RING-type; atypical zinc-finger motif lies at 113 to 155 (CLICLGDFVEGETVRVLPKCNHGFHVKCIDTWLLSHSSCPTCR).

It belongs to the RING-type zinc finger family. ATL subfamily.

The protein localises to the membrane. The catalysed reaction is S-ubiquitinyl-[E2 ubiquitin-conjugating enzyme]-L-cysteine + [acceptor protein]-L-lysine = [E2 ubiquitin-conjugating enzyme]-L-cysteine + N(6)-ubiquitinyl-[acceptor protein]-L-lysine.. The protein operates within protein modification; protein ubiquitination. This chain is RING-H2 finger protein ATL73 (ATL73), found in Arabidopsis thaliana (Mouse-ear cress).